The primary structure comprises 556 residues: Oxygen-dependent choline dehydrogenase (556 aa).

Residue 4-33 (DYIIIGAGSAGNVLATRLTEDPNTTVLLLE) coordinates FAD. The active-site Proton acceptor is His473.

This sequence belongs to the GMC oxidoreductase family. FAD is required as a cofactor.

The catalysed reaction is choline + A = betaine aldehyde + AH2. It catalyses the reaction betaine aldehyde + NAD(+) + H2O = glycine betaine + NADH + 2 H(+). It functions in the pathway amine and polyamine biosynthesis; betaine biosynthesis via choline pathway; betaine aldehyde from choline (cytochrome c reductase route): step 1/1. Functionally, involved in the biosynthesis of the osmoprotectant glycine betaine. Catalyzes the oxidation of choline to betaine aldehyde and betaine aldehyde to glycine betaine at the same rate. In Escherichia coli O127:H6 (strain E2348/69 / EPEC), this protein is Oxygen-dependent choline dehydrogenase.